A 407-amino-acid polypeptide reads, in one-letter code: UDP-N-acetylglucosamine--N-acetylmuramyl-(pentapeptide) pyrophosphoryl-undecaprenol N-acetylglucosamine transferase (407 aa).

The segment at 1–21 (MNNSVREPTRGRRGSPPVADA) is disordered. Residues 38-40 (TAG), Asn157, Ser228, and Gln324 contribute to the UDP-N-acetyl-alpha-D-glucosamine site.

Belongs to the glycosyltransferase 28 family. MurG subfamily.

The protein localises to the cell membrane. The catalysed reaction is di-trans,octa-cis-undecaprenyl diphospho-N-acetyl-alpha-D-muramoyl-L-alanyl-D-glutamyl-meso-2,6-diaminopimeloyl-D-alanyl-D-alanine + UDP-N-acetyl-alpha-D-glucosamine = di-trans,octa-cis-undecaprenyl diphospho-[N-acetyl-alpha-D-glucosaminyl-(1-&gt;4)]-N-acetyl-alpha-D-muramoyl-L-alanyl-D-glutamyl-meso-2,6-diaminopimeloyl-D-alanyl-D-alanine + UDP + H(+). It functions in the pathway cell wall biogenesis; peptidoglycan biosynthesis. In terms of biological role, cell wall formation. Catalyzes the transfer of a GlcNAc subunit on undecaprenyl-pyrophosphoryl-MurNAc-pentapeptide (lipid intermediate I) to form undecaprenyl-pyrophosphoryl-MurNAc-(pentapeptide)GlcNAc (lipid intermediate II). This chain is UDP-N-acetylglucosamine--N-acetylmuramyl-(pentapeptide) pyrophosphoryl-undecaprenol N-acetylglucosamine transferase, found in Mycobacterium leprae (strain TN).